Here is a 154-residue protein sequence, read N- to C-terminus: Keratin-associated protein 9-4 (154 aa).

A run of 15 repeats spans residues 8–12 (CCQPT), 13–17 (CCRTT), 18–22 (CCRTT), 37–41 (CCQPS), 42–46 (CCVSS), 51–55 (CCRPT), 56–60 (CCQNT), 61–65 (CCQPT), 70–74 (CCQPS), 75–79 (CCSTP), 80–84 (CCQPT), 85–89 (CCGSS), 129–133 (CCRPA), 134–138 (CCETT), and 148–152 (CCQPF). The tract at residues 8–152 (CCQPTCCRTT…TCVSSCCQPF (145 aa)) is 15 X 5 AA repeats of C-C-[RQVGE]-[SPTN]-[TASPF].

This sequence belongs to the KRTAP type 9 family. Interacts with hair keratins.

In the hair cortex, hair keratin intermediate filaments are embedded in an interfilamentous matrix, consisting of hair keratin-associated proteins (KRTAP), which are essential for the formation of a rigid and resistant hair shaft through their extensive disulfide bond cross-linking with abundant cysteine residues of hair keratins. The matrix proteins include the high-sulfur and high-glycine-tyrosine keratins. In Homo sapiens (Human), this protein is Keratin-associated protein 9-4 (KRTAP9-4).